Consider the following 176-residue polypeptide: GTP-dependent dephospho-CoA kinase (176 aa).

The GTP site is built by Asp-47, Val-48, Asp-66, and Glu-125.

The protein belongs to the GTP-dependent DPCK family.

It carries out the reaction 3'-dephospho-CoA + GTP = GDP + CoA + H(+). It participates in cofactor biosynthesis; coenzyme A biosynthesis. Functionally, catalyzes the GTP-dependent phosphorylation of the 3'-hydroxyl group of dephosphocoenzyme A to form coenzyme A (CoA). In Methanocella arvoryzae (strain DSM 22066 / NBRC 105507 / MRE50), this protein is GTP-dependent dephospho-CoA kinase.